A 460-amino-acid polypeptide reads, in one-letter code: Probable argininosuccinate lyase (460 aa).

Positions 26, 114, and 159 each coordinate 2-(N(omega)-L-arginino)succinate. His-160 (proton acceptor) is an active-site residue. Residue Ser-281 is the Proton donor of the active site. Residues Asn-289, Tyr-321, Gln-326, and Lys-329 each coordinate 2-(N(omega)-L-arginino)succinate.

The protein belongs to the lyase 1 family. Argininosuccinate lyase subfamily. As to quaternary structure, homotetramer.

It catalyses the reaction 2-(N(omega)-L-arginino)succinate = fumarate + L-arginine. The protein operates within amino-acid biosynthesis; L-arginine biosynthesis; L-arginine from L-ornithine and carbamoyl phosphate: step 3/3. In Schizosaccharomyces pombe (strain 972 / ATCC 24843) (Fission yeast), this protein is Probable argininosuccinate lyase (argx).